The primary structure comprises 158 residues: Cyclic pyranopterin monophosphate synthase (158 aa).

Residues 75-77 (LCH) and 113-114 (ME) contribute to the substrate site. Aspartate 128 is an active-site residue.

It belongs to the MoaC family. In terms of assembly, homohexamer; trimer of dimers.

It catalyses the reaction (8S)-3',8-cyclo-7,8-dihydroguanosine 5'-triphosphate = cyclic pyranopterin phosphate + diphosphate. The protein operates within cofactor biosynthesis; molybdopterin biosynthesis. Its function is as follows. Catalyzes the conversion of (8S)-3',8-cyclo-7,8-dihydroguanosine 5'-triphosphate to cyclic pyranopterin monophosphate (cPMP). The sequence is that of Cyclic pyranopterin monophosphate synthase from Roseiflexus castenholzii (strain DSM 13941 / HLO8).